The following is a 74-amino-acid chain: uncharacterized protein (74 aa).

A coiled-coil region spans residues 25-62 (QQTIDRLAGLELRMKQLIRAIEVNNELLRTMQEQQNRV).

This is an uncharacterized protein from Bacillus subtilis (strain 168).